The chain runs to 702 residues: MVSMFSLFLLLIEQSPLVASLQQSQRHIVGVPWEKQHLYDSNEPDLTKWHCLNHEDIVLDISQINDGVCDCPDGSDEPGSAACVEDIFKSVAEGGGKVNKYFYCDNKGFIPRYIRKSEVADGICDCCDCSDELLSGYELFDAGSNCSQLKNEFDIMASKELSSYREGKEALEELERKYGTKEEAITRGNCLEEDKEKASAEIKVLSNRLSENRAKLEQLRGEYFNQLSHDPILYQFEQLNSTRLGSDILTSFTMVSRVSKGYQDIFKILSDLSEAYTPSLNDKVVNDNIKKFRKVRRRAEKAKINADSKIDDEQADNLYLYFTEEVPQIFLKRESENTLRYVIGKSNFVQALVEGKINYTNDILEYIREFRLIMDDISQNYNVNFQDAGVKSAVDSYKNYLGEYGELAELEPAHPSESLLRSLSEVTSFVNENAPKVLPPDAVESEQDTNSDHIGTSGDLRNKLKEILSKLNIFSSRKDLVSLEKRFRSCESQVSLLENELKQKMDYKKLLDETEDEGTNSTAGNLTELLELMGSQSYCLDDILDNYVYTICFQRPMTEGVIYQAEDKVDGKKVLIGRFKTSGFNVDLNMEKYAEHLKATYDEKSDLISNLAAIQDDDGNMQHYVFGNLNELNNGLVLEYENGDQCWNGPRRSATVFVRCSDKFKIRSVHEATKCNYIFDVVGPLGCNKTFEYEPPKFNLSE.

Residues 1–20 (MVSMFSLFLLLIEQSPLVAS) form the signal peptide. Residue N145 is glycosylated (N-linked (GlcNAc...) asparagine). Residues 163-228 (SYREGKEALE…LRGEYFNQLS (66 aa)) are a coiled coil. Residues N240 and N358 are each glycosylated (N-linked (GlcNAc...) asparagine). Positions 435–457 (PKVLPPDAVESEQDTNSDHIGTS) are disordered. Residues 478–517 (KDLVSLEKRFRSCESQVSLLENELKQKMDYKKLLDETEDE) are a coiled coil. N520 and N525 each carry an N-linked (GlcNAc...) asparagine glycan. The region spanning 537–689 (SYCLDDILDN…DVVGPLGCNK (153 aa)) is the MRH domain. Cystine bridges form between C539/C552, C646/C675, and C660/C687. Residues N688 and N699 are each glycosylated (N-linked (GlcNAc...) asparagine).

In terms of assembly, heterodimer of a catalytic subunit alpha (ROT2) and a subunit beta (GTB1).

The protein resides in the endoplasmic reticulum. Subunit of glucosidase 2, which cleaves sequentially the 2 innermost alpha-1,3-linked glucose residues from the Glc(2)Man(9)GlcNAc(2) oligosaccharide precursor of immature glycoproteins. Specifically required for the cleavage of the final glucose. In Saccharomyces cerevisiae (strain ATCC 204508 / S288c) (Baker's yeast), this protein is Glucosidase 2 subunit beta (GTB1).